Reading from the N-terminus, the 325-residue chain is tRNA-dihydrouridine(16) synthase (325 aa).

FMN contacts are provided by residues 12 to 14 (PMQ) and glutamine 73. The active-site Proton donor is the cysteine 103. Residues lysine 144, 205–207 (NGE), and 229–230 (GR) contribute to the FMN site.

The protein belongs to the Dus family. DusC subfamily. FMN is required as a cofactor.

It catalyses the reaction 5,6-dihydrouridine(16) in tRNA + NADP(+) = uridine(16) in tRNA + NADPH + H(+). It carries out the reaction 5,6-dihydrouridine(16) in tRNA + NAD(+) = uridine(16) in tRNA + NADH + H(+). In terms of biological role, catalyzes the synthesis of 5,6-dihydrouridine (D), a modified base found in the D-loop of most tRNAs, via the reduction of the C5-C6 double bond in target uridines. Specifically modifies U16 in tRNAs. The protein is tRNA-dihydrouridine(16) synthase of Haemophilus ducreyi (strain 35000HP / ATCC 700724).